Reading from the N-terminus, the 202-residue chain is Transmembrane 4 L6 family member 4 (202 aa).

The Cytoplasmic portion of the chain corresponds to 1 to 9; it reads MCTGGCARC. A helical membrane pass occupies residues 10 to 30; the sequence is LGGTLIPLAVFAVLANILLFF. The Extracellular portion of the chain corresponds to 31 to 48; sequence PGGKVVDDNSHLSDEVWY. The helical transmembrane segment at 49–69 threads the bilayer; it reads FGGILGSGVLMIFPALVFLGL. Residues 70 to 93 are Cytoplasmic-facing; sequence QNNDCCGCCGNESCGKRFAMFTST. Residues 94 to 114 traverse the membrane as a helical segment; it reads LFAVVGFLGAAYSFIVSAVSI. Over 115–158 the chain is Extracellular; that stretch reads NKGPKCFMTNNTWGYPFHDGDYLNDQALWSKCEEPRDVVPWNLT. Asn-156 carries an N-linked (GlcNAc...) asparagine glycan. A helical membrane pass occupies residues 159-179; the sequence is LFSILLVIGGIQMVLCAIQVI. Over 180 to 202 the chain is Cytoplasmic; the sequence is NGLLGTLCGDCQCCGCCGGDRPV.

It belongs to the L6 tetraspanin family. Expressed in liver and testis. Up-regulated in regenerating liver after partial hepatectomy.

It is found in the membrane. Its function is as follows. Regulates the adhesive and proliferative status of intestinal epithelial cells. Can mediate density-dependent cell proliferation. The polypeptide is Transmembrane 4 L6 family member 4 (Tm4sf4) (Rattus norvegicus (Rat)).